The primary structure comprises 511 residues: 2'-acyl-2-O-sulfo-trehalose (hydroxy)phthioceranyltransferase PapA1 (511 aa).

It belongs to the PapA acyltransferase family.

It carries out the reaction a (hydroxy)phthioceranyl-[(hydroxy)phthioceranic acid synthase] + 2'-palmitoyl/stearoyl-2-O-sulfo-alpha,alpha-trehalose = a 3'-(hydroxy)phthioceranyl-2'-palmitoyl/stearoyl-2-O-sulfo-alpha,alpha-trehalose + holo-[(hydroxy)phthioceranic acid synthase].. In terms of biological role, required for the biosynthesis of sulfolipid-1 (SL-1), a major mycobacterial cell wall lipid. Catalyzes the acylation of trehalose-2-sulfate-2'-palmitate (SL659) by adding the (hydroxy)phthioceranoyl group at the 3'-position to yield the diacylated intermediate 2-palmitoyl-3-(C43)-phthioceranyl-alpha, alpha'-D-trehalose-2'-sulfate (SL1278). The sequence is that of 2'-acyl-2-O-sulfo-trehalose (hydroxy)phthioceranyltransferase PapA1 (papA1) from Mycobacterium tuberculosis (strain CDC 1551 / Oshkosh).